We begin with the raw amino-acid sequence, 592 residues long: Sodium- and chloride-dependent transporter XTRP3A (592 aa).

Topologically, residues 1–7 (MEKARPQ) are cytoplasmic. A helical membrane pass occupies residues 8-28 (WGHPLQFVFACISYAVGLGNV). At 29–42 (WRFPYLCQMYGGGS) the chain is on the extracellular side. A helical membrane pass occupies residues 43-63 (FLVPYIIMLIVEGMPLLYLEL). Residues 64–79 (AVGQRMRQGSIGAWRT) are Cytoplasmic-facing. Residues 80 to 100 (ISPYLSGVGVASVVVSFFLSM) traverse the membrane as a helical segment. The Extracellular portion of the chain corresponds to 101 to 165 (YYNVINAWGF…ISPSIQENGG (65 aa)). N-linked (GlcNAc...) asparagine glycosylation is present at N131. A helical transmembrane segment spans residues 166–186 (VQWEPALCLTLAWLMVYLCIL). Over 187–194 (RGTESTGK) the chain is Cytoplasmic. Residues 195–215 (VVYFTASMPYCVLIIYLVRGL) form a helical membrane-spanning segment. Residues 216-241 (TLHGATNGLMYMFTPKMEQLANPKAW) are Extracellular-facing. Residues 242–262 (INAATQIFFSLGLGFGSLIAF) form a helical membrane-spanning segment. Residues 263–276 (ASYNEPSNNCQKHA) are Cytoplasmic-facing. The helical transmembrane segment at 277–297 (IIVSIINSSTSIFASIVTFSI) threads the bilayer. The Extracellular segment spans residues 298–389 (YGFKATFNYE…EAIKNMEVSQ (92 aa)). Residues 390–410 (LWSVLYFFMLLMLGIGSMLGN) form a helical membrane-spanning segment. Topologically, residues 411–431 (TAAILTPLTDSKVISSYLPKE) are cytoplasmic. A helical transmembrane segment spans residues 432-452 (AISGLVCLINCAVGMVFTMEA). Residues 453–465 (GNYWFDIFNDYAA) are Extracellular-facing. Residues 466–486 (TLSLLLIVLVETIAVCYVYGL) traverse the membrane as a helical segment. The Cytoplasmic portion of the chain corresponds to 487 to 504 (KRFESDLRAMTGRTLSWY). The helical transmembrane segment at 505-525 (WKVMWAFVSPLLIVGLFIFYL) threads the bilayer. Residues 526-554 (SDYILTGTLQYQAWDATQGQLVTKDYPPH) lie on the Extracellular side of the membrane. A helical transmembrane segment spans residues 555 to 575 (ALAVIGLLVASSTMCIPLVAL). The Cytoplasmic portion of the chain corresponds to 576–592 (GTFIRNRLKRGGSAPVA).

The protein belongs to the sodium:neurotransmitter symporter (SNF) (TC 2.A.22) family. SLC6A20 subfamily. Expressed in brain, kidney, small intestine, thymus, spleen and lung. In the brain, expressed in cerebellum, cortex and brain stem. Not detected in liver, muscle or heart. In brain, widespread in various regions, including the meninges, choroid plexus, cortex, hippocampus and thalamus.

Its subcellular location is the apical cell membrane. The catalysed reaction is L-proline(out) + chloride(out) + 2 Na(+)(out) = L-proline(in) + chloride(in) + 2 Na(+)(in). It carries out the reaction 4-hydroxy-L-proline(out) + chloride(out) + 2 Na(+)(out) = 4-hydroxy-L-proline(in) + chloride(in) + 2 Na(+)(in). The enzyme catalyses 2-methyl-2-(methylamino)propanoate(out) + chloride(out) + 2 Na(+)(out) = 2-methyl-2-(methylamino)propanoate(in) + chloride(in) + 2 Na(+)(in). It catalyses the reaction L-pipecolate(out) + chloride(out) + 2 Na(+)(out) = L-pipecolate(in) + chloride(in) + 2 Na(+)(in). The catalysed reaction is glycine betaine(out) + chloride(out) + 2 Na(+)(out) = glycine betaine(in) + chloride(in) + 2 Na(+)(in). It carries out the reaction glycine(out) + chloride(out) + 2 Na(+)(out) = glycine(in) + chloride(in) + 2 Na(+)(in). Functionally, mediates the Na(+)- and Cl(-)-dependent uptake of imino acids such as L-proline, N-methyl-L-proline and pipecolate as well as N-methylated amino acids. Also transports glycine, regulates proline and glycine homeostasis in the brain playing a role in the modulation of NMDAR currents. The sequence is that of Sodium- and chloride-dependent transporter XTRP3A from Mus musculus (Mouse).